Consider the following 47-residue polypeptide: Alpha-conotoxin VxXXC (47 aa).

Hydroxyproline; partial occurs at positions 10, 21, and 29. Cystine bridges form between cysteine 18/cysteine 27, cysteine 23/cysteine 35, cysteine 28/cysteine 45, and cysteine 33/cysteine 47.

Homodimer. Pseudo-homodimer (identical sequence, different post-translational modifications). HydroxyPro-10 is only found in a minor form. Expressed by the venom duct.

The protein localises to the secreted. Its function is as follows. Alpha-conotoxins act on postsynaptic membranes, they bind to the nicotinic acetylcholine receptors (nAChR) and thus inhibit them. Through its two C-terminal domains, this homodimeric protein would bind to two nAChR allosteric sites, located outside the nAChR C-loop of the principal binding face and at the adjacent binding interface in a clockwise direction. This toxin specifically blocks mammalian neuronal nAChR of the alpha-7/CHRNA7, alpha-3-beta-2/CHRNA3-CHRNB2 and alpha-4-beta-2/CHRNA4-CHRNB2 subtypes. VxXXA and VxXXB inhibit alpha-7/CHRNA7 and alpha-3-beta-2/CHRNA3-CHRNB2 nAChR more efficiently than VxXXC. VxXXB is the most effective at inhibiting alpha-4-beta-2/CHRNA4-CHRNB2 nAChR, followed by VxXXC and VxXXA. The sequence is that of Alpha-conotoxin VxXXC from Conus vexillum (Flag cone).